The primary structure comprises 130 residues: Blasticidin-S deaminase (130 aa).

A CMP/dCMP-type deaminase domain is found at 1-129 (MPLSQEESTL…ELLPSGYMNR (129 aa)). Serine 28 is a binding site for substrate. Residue cysteine 54 coordinates Zn(2+). Glutamate 56 (proton donor) is an active-site residue. Substrate is bound at residue arginine 82. Zn(2+)-binding residues include cysteine 88 and cysteine 91. Tyrosine 126 provides a ligand contact to substrate.

It belongs to the cytidine and deoxycytidylate deaminase family. As to quaternary structure, homotetramer. The cofactor is Zn(2+).

The enzyme catalyses blasticidin S + H2O + H(+) = deaminohydroxyblasticidin S + NH4(+). Functionally, catalyzes the deamination of the cytosine moiety of the antibiotics blasticidin S, cytomycin and acetylblasticidin S. In Aspergillus terreus (strain NIH 2624 / FGSC A1156), this protein is Blasticidin-S deaminase (bsd).